A 687-amino-acid polypeptide reads, in one-letter code: CWF19-like protein 2 homolog (687 aa).

The stretch at 6–51 (FESGREKDKARQELREAREAMLQQAKERAELRGQRERQKELRGEAD) forms a coiled coil. The segment covering 24-50 (EAMLQQAKERAELRGQRERQKELRGEA) has biased composition (basic and acidic residues). A disordered region spans residues 24–281 (EAMLQQAKER…PKSRPSCLTD (258 aa)). Basic residues predominate over residues 66–92 (KKSKKNVSKHKSRSKSKSSKKSRKHRN). Low complexity predominate over residues 93–107 (SSSSSESSTSSSSSF). Residues 108–131 (SEDEKERKRRKKKSKRSRKESASE) are a coiled coil. Basic residues predominate over residues 114-125 (RKRRKKKSKRSR). Phosphoserine occurs at positions 128 and 130. Composition is skewed to basic and acidic residues over residues 146 to 157 (VTKKEPPQRDDW) and 168 to 180 (FSRERKEPAKPNE). Residues 290-325 (KAIKAELKGKKELAAELNQQLEAARKERAEFIASGE) are a coiled coil. The disordered stretch occupies residues 355–383 (VRPLVQSGDPNESYGGRMGPKRGSKKVDT). The stretch at 444–475 (KQISASDAEKREMQSAIREHEKLVATLDNCER) forms a coiled coil.

It belongs to the CWF19 family.

The polypeptide is CWF19-like protein 2 homolog (Drosophila melanogaster (Fruit fly)).